A 687-amino-acid polypeptide reads, in one-letter code: Complement C1s subcomponent (687 aa).

The N-terminal stretch at 1–15 is a signal peptide; it reads MWCIVLLSLLAWVDA. The region spanning 16–130 is the CUB 1 domain; it reads EPTMYGEILS…TGFAAYYVAV (115 aa). Ca(2+) contacts are provided by Glu-60, Asp-68, Asp-113, Asp-131, Val-132, and Glu-134. Cys-65 and Cys-83 are oxidised to a cystine. An EGF-like; calcium-binding domain is found at 131–172; the sequence is DVNECTDFADSPCSHFCNNYIGGYFCSCPPEYFLHEDKKNCG. Intrachain disulfides connect Cys-135–Cys-147, Cys-143–Cys-156, and Cys-158–Cys-171. Ca(2+) contacts are provided by Asn-149, Tyr-150, and Gly-153. (3R)-3-hydroxyasparagine is present on Asn-149. Asn-174 carries an N-linked (GlcNAc...) asparagine glycan. Cystine bridges form between Cys-175–Cys-202, Cys-234–Cys-251, Cys-294–Cys-341, Cys-321–Cys-354, Cys-359–Cys-403, Cys-386–Cys-421, Cys-425–Cys-548, Cys-594–Cys-617, and Cys-626–Cys-658. In terms of domain architecture, CUB 2 spans 175-290; that stretch reads CSGDVFTTLI…KGWKFRYHGD (116 aa). 2 consecutive Sushi domains span residues 292-356 and 357-423; these read IPCP…RCQP and VDCG…KCVP. An N-linked (GlcNAc...) asparagine glycan is attached at Asn-406. A Peptidase S1 domain is found at 438–679; sequence IFGGIITKIE…YIDWIRETMQ (242 aa). Catalysis depends on charge relay system residues His-475 and Asp-528. The Charge relay system role is filled by Ser-630.

This sequence belongs to the peptidase S1 family. C1 is a calcium-dependent trimolecular complex of C1q, C1r and C1s in the molar ration of 1:2:2. Activated C1s is an disulfide-linked heterodimer of a heavy chain and a light chain. In terms of processing, the iron and 2-oxoglutarate dependent 3-hydroxylation of aspartate and asparagine is (R) stereospecific within EGF domains.

The catalysed reaction is Cleavage of Arg-|-Ala bond in complement component C4 to form C4a and C4b, and Lys(or Arg)-|-Lys bond in complement component C2 to form C2a and C2b: the 'classical' pathway C3 convertase.. With respect to regulation, inhibited by SERPING1. C1s B chain is a serine protease that combines with C1q and C1r to form C1, the first component of the classical pathway of the complement system. C1r activates C1s so that it can, in turn, activate C2 and C4. Also cleaves IGFBP5 and thereby inhibits the trophic effects of IGF1. This is Complement C1s subcomponent from Sus scrofa (Pig).